Here is a 224-residue protein sequence, read N- to C-terminus: Lipoprotein-releasing system ATP-binding protein LolD (224 aa).

In terms of domain architecture, ABC transporter spans 5–224; it reads LVLDGLTKAY…VVRLEAGRVV (220 aa). 42-49 serves as a coordination point for ATP; the sequence is APSGAGKS.

The protein belongs to the ABC transporter superfamily. Lipoprotein translocase (TC 3.A.1.125) family. As to quaternary structure, the complex is composed of two ATP-binding proteins (LolD) and two transmembrane proteins (LolC and LolE).

The protein localises to the cell inner membrane. Functionally, part of the ABC transporter complex LolCDE involved in the translocation of mature outer membrane-directed lipoproteins, from the inner membrane to the periplasmic chaperone, LolA. Responsible for the formation of the LolA-lipoprotein complex in an ATP-dependent manner. The sequence is that of Lipoprotein-releasing system ATP-binding protein LolD from Cereibacter sphaeroides (strain ATCC 17023 / DSM 158 / JCM 6121 / CCUG 31486 / LMG 2827 / NBRC 12203 / NCIMB 8253 / ATH 2.4.1.) (Rhodobacter sphaeroides).